The chain runs to 197 residues: Probable nicotinate-nucleotide adenylyltransferase (197 aa).

Belongs to the NadD family.

It catalyses the reaction nicotinate beta-D-ribonucleotide + ATP + H(+) = deamido-NAD(+) + diphosphate. It participates in cofactor biosynthesis; NAD(+) biosynthesis; deamido-NAD(+) from nicotinate D-ribonucleotide: step 1/1. Its function is as follows. Catalyzes the reversible adenylation of nicotinate mononucleotide (NaMN) to nicotinic acid adenine dinucleotide (NaAD). In Bordetella avium (strain 197N), this protein is Probable nicotinate-nucleotide adenylyltransferase.